The primary structure comprises 785 residues: Conidiophore development regulator abaA (785 aa).

Residues 1-22 form a disordered region; the sequence is MAEWQTECMLPPTQPGFEGVGP. The segment at residues 130 to 204 is a DNA-binding region (TEA); that stretch reads GKDGEPVWSD…QVLDSFLKGD (75 aa). Residues 213–232 are disordered; it reads EQPADRSNGQPPSAGPRWRN.

It belongs to the TEC1 family.

It localises to the nucleus. In terms of biological role, brlA, abaA and wetA are pivotal regulators of conidiophore development and conidium maturation. They act individually and together to regulate their own expression and that of numerous other sporulation-specific genes. Binds to the sequence 5'-CATTCY-3', where Y is a pyrimidine, making both major- and minor-groove contacts. Controls expression of wetA. The protein is Conidiophore development regulator abaA of Aspergillus oryzae (strain ATCC 42149 / RIB 40) (Yellow koji mold).